Reading from the N-terminus, the 162-residue chain is Dihydrofolate reductase (162 aa).

A DHFR domain is found at lysine 3–arginine 161. Isoleucine 7–alanine 9 is a binding site for substrate. NADP(+) is bound by residues alanine 8–alanine 9 and isoleucine 16–alanine 21. A substrate-binding site is contributed by aspartate 29. Glycine 45–threonine 48 lines the NADP(+) pocket. Residue arginine 60 participates in substrate binding. NADP(+) contacts are provided by residues isoleucine 65–glutamine 68 and methionine 98–isoleucine 103. Threonine 117 provides a ligand contact to substrate.

The protein belongs to the dihydrofolate reductase family.

It catalyses the reaction (6S)-5,6,7,8-tetrahydrofolate + NADP(+) = 7,8-dihydrofolate + NADPH + H(+). The protein operates within cofactor biosynthesis; tetrahydrofolate biosynthesis; 5,6,7,8-tetrahydrofolate from 7,8-dihydrofolate: step 1/1. Functionally, key enzyme in folate metabolism. Catalyzes an essential reaction for de novo glycine and purine synthesis, and for DNA precursor synthesis. This is Dihydrofolate reductase (folA) from Neisseria meningitidis serogroup A / serotype 4A (strain DSM 15465 / Z2491).